We begin with the raw amino-acid sequence, 167 residues long: Lipoprotein signal peptidase (167 aa).

4 helical membrane passes run 8 to 28 (TFLT…VVLL), 46 to 66 (WGHF…FGLF), 68 to 88 (QYKI…ALFL), and 101 to 121 (IALT…LLHG). Residues aspartate 125 and aspartate 143 contribute to the active site. Residues 139-159 (FNLADAFISIGTLLLIGHLYF) form a helical membrane-spanning segment.

It belongs to the peptidase A8 family.

Its subcellular location is the cell inner membrane. The enzyme catalyses Release of signal peptides from bacterial membrane prolipoproteins. Hydrolyzes -Xaa-Yaa-Zaa-|-(S,diacylglyceryl)Cys-, in which Xaa is hydrophobic (preferably Leu), and Yaa (Ala or Ser) and Zaa (Gly or Ala) have small, neutral side chains.. It functions in the pathway protein modification; lipoprotein biosynthesis (signal peptide cleavage). Its function is as follows. This protein specifically catalyzes the removal of signal peptides from prolipoproteins. The polypeptide is Lipoprotein signal peptidase (Chlamydia trachomatis serovar L2 (strain ATCC VR-902B / DSM 19102 / 434/Bu)).